Reading from the N-terminus, the 191-residue chain is Cell division protein SepF (191 aa).

A compositionally biased stretch (polar residues) spans phenylalanine 153–proline 178. The interval phenylalanine 153 to asparagine 191 is disordered.

Belongs to the SepF family. As to quaternary structure, homodimer. Interacts with FtsZ.

The protein localises to the cytoplasm. Functionally, cell division protein that is part of the divisome complex and is recruited early to the Z-ring. Probably stimulates Z-ring formation, perhaps through the cross-linking of FtsZ protofilaments. Its function overlaps with FtsA. The sequence is that of Cell division protein SepF from Prochlorococcus marinus subsp. pastoris (strain CCMP1986 / NIES-2087 / MED4).